Reading from the N-terminus, the 448-residue chain is Tubulin beta chain (448 aa).

Positions 11, 69, 138, 142, 143, 144, 204, and 226 each coordinate GTP. Glutamate 69 provides a ligand contact to Mg(2+). The disordered stretch occupies residues 425–448 (YQDASISEGEEEYLEEEEPLEHEE). Residues 432-448 (EGEEEYLEEEEPLEHEE) are compositionally biased toward acidic residues.

Belongs to the tubulin family. Dimer of alpha and beta chains. A typical microtubule is a hollow water-filled tube with an outer diameter of 25 nm and an inner diameter of 15 nM. Alpha-beta heterodimers associate head-to-tail to form protofilaments running lengthwise along the microtubule wall with the beta-tubulin subunit facing the microtubule plus end conferring a structural polarity. Microtubules usually have 13 protofilaments but different protofilament numbers can be found in some organisms and specialized cells. Mg(2+) serves as cofactor.

The protein resides in the cytoplasm. The protein localises to the cytoskeleton. Functionally, tubulin is the major constituent of microtubules, a cylinder consisting of laterally associated linear protofilaments composed of alpha- and beta-tubulin heterodimers. Microtubules grow by the addition of GTP-tubulin dimers to the microtubule end, where a stabilizing cap forms. Below the cap, tubulin dimers are in GDP-bound state, owing to GTPase activity of alpha-tubulin. The chain is Tubulin beta chain (benA56) from Aspergillus oryzae (strain ATCC 42149 / RIB 40) (Yellow koji mold).